The following is a 455-amino-acid chain: RQC trigger complex subunit RQT4 homolog (455 aa).

Disordered regions lie at residues 64–98 (STHS…SHPS) and 118–148 (PASR…GVMT). Polar residues-rich tracts occupy residues 65 to 98 (THSG…SHPS) and 119 to 130 (ASRNKSQSNNIS). Phosphoserine is present on Ser70. Ser380 is subject to Phosphoserine.

Component of the RQT (ribosome quality control trigger) complex.

The protein resides in the cytoplasm. It is found in the cytosol. In terms of biological role, probably functions as part of the RQC trigger (RQT) complex that activates the ribosome quality control (RQC) pathway, a pathway that degrades nascent peptide chains during problematic translation. The polypeptide is RQC trigger complex subunit RQT4 homolog (Schizosaccharomyces pombe (strain 972 / ATCC 24843) (Fission yeast)).